A 529-amino-acid polypeptide reads, in one-letter code: Cytochrome P450 monooxygenase ausG (529 aa).

A helical transmembrane segment spans residues 31-51; the sequence is LLVVCGLPGLLLLFFVTAILL. Cysteine 470 contacts heme.

This sequence belongs to the cytochrome P450 family. Requires heme as cofactor.

Its subcellular location is the membrane. It participates in secondary metabolite biosynthesis; terpenoid biosynthesis. Its function is as follows. Cytochrome P450 monooxygenase; part of the gene cluster that mediates the biosynthesis of calidodehydroaustin, a fungal meroterpenoid. The first step of the pathway is the synthesis of 3,5-dimethylorsellinic acid by the polyketide synthase ausA. 3,5-dimethylorsellinic acid is then prenylated by the polyprenyl transferase ausN. Further epoxidation by the FAD-dependent monooxygenase ausM and cyclization by the probable terpene cyclase ausL lead to the formation of protoaustinoid A. Protoaustinoid A is then oxidized to spiro-lactone preaustinoid A3 by the combined action of the FAD-binding monooxygenases ausB and ausC, and the dioxygenase ausE. Acid-catalyzed keto-rearrangement and ring contraction of the tetraketide portion of preaustinoid A3 by ausJ lead to the formation of preaustinoid A4. The aldo-keto reductase ausK, with the help of ausH, is involved in the next step by transforming preaustinoid A4 into isoaustinone which is in turn hydroxylated by the P450 monooxygenase ausI to form austinolide. The cytochrome P450 monooxygenase ausG modifies austinolide to austinol. Austinol is further acetylated to austin by the O-acetyltransferase ausP, which spontaneously changes to dehydroaustin. The cytochrome P450 monooxygenase ausR then converts dehydroaustin is into 7-dehydrodehydroaustin. The hydroxylation catalyzed by ausR permits the O-acetyltransferase ausQ to add an additional acetyl group to the molecule, leading to the formation of acetoxydehydroaustin. The short chain dehydrogenase ausT catalyzes the reduction of the double bond present between carbon atoms 1 and 2 to convert 7-dehydrodehydroaustin into 1,2-dihydro-7-hydroxydehydroaustin. AusQ catalyzes not only an acetylation reaction but also the addition of the PKS ausV diketide product to 1,2-dihydro-7-hydroxydehydroaustin, forming precalidodehydroaustin. Finally, the iron/alpha-ketoglutarate-dependent dioxygenase converts precalidodehydroaustin into calidodehydroaustin. In Aspergillus calidoustus, this protein is Cytochrome P450 monooxygenase ausG.